The primary structure comprises 172 residues: MSAQVSLELHHRISQFLFHEASLLDDWKFRDWLEQLDKEIRYTMRTTVNAQTRDRRKGVQPPTTWIFNDTKDQLERRIARLETGMAWAEEPPSRTRHLISNCQISETDIPNVFAVRVNYLLYRAQKERDETFYVGTRFDKVRRLEDDNWRLLERDIVLDQAVITSHNLSVLF.

Belongs to the bacterial ring-hydroxylating dioxygenase beta subunit family. As to quaternary structure, this dioxygenase system consists of four proteins: the two subunits of the hydroxylase component (HcaE and HcaF), a ferredoxin (HcaC) and a ferredoxin reductase (HcaD).

The enzyme catalyses 3-phenylpropanoate + NADH + O2 + H(+) = 3-(cis-5,6-dihydroxycyclohexa-1,3-dien-1-yl)propanoate + NAD(+). It catalyses the reaction (E)-cinnamate + NADH + O2 + H(+) = (2E)-3-(cis-5,6-dihydroxycyclohexa-1,3-dien-1-yl)prop-2-enoate + NAD(+). It functions in the pathway aromatic compound metabolism; 3-phenylpropanoate degradation. Functionally, part of the multicomponent 3-phenylpropionate dioxygenase. Converts 3-phenylpropionic acid (PP) and cinnamic acid (CI) into 3-phenylpropionate-dihydrodiol (PP-dihydrodiol) and cinnamic acid-dihydrodiol (CI-dihydrodiol), respectively. The polypeptide is 3-phenylpropionate/cinnamic acid dioxygenase subunit beta (Shigella sonnei (strain Ss046)).